The chain runs to 299 residues: rRNA methyltransferase (299 aa).

The interval 14–53 (AEKRSGRGRMAAARTTGAQSRKTAQRSGRSEADRRRRVHG) is disordered. Over residues 21 to 31 (GRMAAARTTGA) the composition is skewed to low complexity. S-adenosyl-L-methionine is bound by residues asparagine 55, leucine 57, glycine 82, glutamate 103, aspartate 128, and asparagine 144.

The protein belongs to the class I-like SAM-binding methyltransferase superfamily. rRNA adenine N(6)-methyltransferase family.

Its function is as follows. Probable RNA methylase. Confers resistance to carbomycin and several other macrolides, lincomycin and vernamycin B, but not to all macrolide-lincosamide-streptogramin B antibiotics. This is rRNA methyltransferase (carB) from Streptomyces thermotolerans.